The following is a 329-amino-acid chain: Neuropeptides B/W receptor type 1 (329 aa).

At 1-39 (MHNLSLFEPGRGNVSCGGPFLGCPNESNPAPLPLPQPLA) the chain is on the extracellular side. 3 N-linked (GlcNAc...) asparagine glycosylation sites follow: Asn3, Asn13, and Asn25. Residues 40 to 63 (VAVPVVYGVICAVGLAGNSAVLYV) form a helical membrane-spanning segment. Topologically, residues 64–74 (LLRTPRMKTVT) are cytoplasmic. Residues 75 to 99 (NVFILNLAIADELFTLVLPINIADF) traverse the membrane as a helical segment. At 100–114 (LLRRWPFGEVMCKLI) the chain is on the extracellular side. Cys111 and Cys190 are oxidised to a cystine. The helical transmembrane segment at 115–134 (VAVDQYNTFSSLYFLAVMSA) threads the bilayer. The Cytoplasmic portion of the chain corresponds to 135–159 (DRYLVVLATAESRRVSGRTYGAARA). The chain crosses the membrane as a helical span at residues 160-179 (VSLAVWALVTLVVLPFAVFA). The Extracellular segment spans residues 180 to 204 (RLDEEQGRRQCVLVFPQPEAFWWRA). Residues 205 to 226 (SRLYTLVLGFAIPVSTICALYI) form a helical membrane-spanning segment. Topologically, residues 227–250 (TLLCRLRAIQLDSHAKALDRAKKR) are cytoplasmic. Residues 251–275 (VTLLVVAILAVCLLCWTPYHLSTIV) traverse the membrane as a helical segment. The Extracellular portion of the chain corresponds to 276–285 (ALTTDLPQTP). The helical transmembrane segment at 286 to 300 (LVIGISYFITSLSYA) threads the bilayer. The Cytoplasmic portion of the chain corresponds to 301 to 329 (NSCLNPFLYAFLDDSFRRSLRQLVSCRTA).

Belongs to the G-protein coupled receptor 1 family.

It is found in the cell membrane. Functionally, interacts specifically with a number of opioid ligands. Receptor for neuropeptides B and W, which may be involved in neuroendocrine system regulation, food intake and the organization of other signals. This is Neuropeptides B/W receptor type 1 (Npbwr1) from Rattus norvegicus (Rat).